Reading from the N-terminus, the 443-residue chain is Dihydroorotase (443 aa).

Zn(2+)-binding residues include histidine 80 and histidine 82. Substrate-binding positions include 82–84 (HFR) and asparagine 114. Aspartate 170, histidine 197, and histidine 251 together coordinate Zn(2+). Residue asparagine 297 coordinates substrate. Zn(2+) is bound at residue aspartate 324. Aspartate 324 is an active-site residue. Substrate is bound by residues histidine 328 and 342 to 343 (FG).

This sequence belongs to the metallo-dependent hydrolases superfamily. DHOase family. Class I DHOase subfamily. The cofactor is Zn(2+).

The catalysed reaction is (S)-dihydroorotate + H2O = N-carbamoyl-L-aspartate + H(+). Its pathway is pyrimidine metabolism; UMP biosynthesis via de novo pathway; (S)-dihydroorotate from bicarbonate: step 3/3. Its function is as follows. Catalyzes the reversible cyclization of carbamoyl aspartate to dihydroorotate. This Wolbachia sp. subsp. Brugia malayi (strain TRS) protein is Dihydroorotase.